The following is a 454-amino-acid chain: NADP-specific glutamate dehydrogenase (454 aa).

Serine 2 bears the N-acetylserine mark. Lysine 114 is an active-site residue.

Belongs to the Glu/Leu/Phe/Val dehydrogenases family. Homohexamer.

The enzyme catalyses L-glutamate + NADP(+) + H2O = 2-oxoglutarate + NH4(+) + NADPH + H(+). The protein is NADP-specific glutamate dehydrogenase (GDH) of Neurospora sitophila (Chrysonilia sitophila).